The chain runs to 173 residues: MSKWLNVGKIVNTHGVRGEVRVLSTTDFEDDRFSSGKTLYVMRPNQNERVAVTVASHRKHKNFDLLCFEGYPSINDVEAFKGGRLQVPIEDRPELGEGEFFYHEIIGCSVVTIAGEELGKVKEILSPGANDVWVVQCRRGGKDLLIPYIEQVVKQVDLEKQQITIEPMEGLLE.

The region spanning 97 to 171 (EGEFFYHEII…QITIEPMEGL (75 aa)) is the PRC barrel domain.

This sequence belongs to the RimM family. Binds ribosomal protein uS19.

The protein localises to the cytoplasm. Functionally, an accessory protein needed during the final step in the assembly of 30S ribosomal subunit, possibly for assembly of the head region. Essential for efficient processing of 16S rRNA. May be needed both before and after RbfA during the maturation of 16S rRNA. It has affinity for free ribosomal 30S subunits but not for 70S ribosomes. This chain is Ribosome maturation factor RimM, found in Halalkalibacterium halodurans (strain ATCC BAA-125 / DSM 18197 / FERM 7344 / JCM 9153 / C-125) (Bacillus halodurans).